The chain runs to 320 residues: 4-hydroxy-3-methylbut-2-enyl diphosphate reductase (320 aa).

Cysteine 12 is a [4Fe-4S] cluster binding site. The (2E)-4-hydroxy-3-methylbut-2-enyl diphosphate site is built by histidine 41 and histidine 74. Dimethylallyl diphosphate contacts are provided by histidine 41 and histidine 74. 2 residues coordinate isopentenyl diphosphate: histidine 41 and histidine 74. Cysteine 96 is a [4Fe-4S] cluster binding site. Histidine 124 contacts (2E)-4-hydroxy-3-methylbut-2-enyl diphosphate. Histidine 124 provides a ligand contact to dimethylallyl diphosphate. An isopentenyl diphosphate-binding site is contributed by histidine 124. The active-site Proton donor is glutamate 126. Threonine 167 contacts (2E)-4-hydroxy-3-methylbut-2-enyl diphosphate. Cysteine 197 contributes to the [4Fe-4S] cluster binding site. Residues serine 225, serine 226, asparagine 227, and serine 269 each contribute to the (2E)-4-hydroxy-3-methylbut-2-enyl diphosphate site. 4 residues coordinate dimethylallyl diphosphate: serine 225, serine 226, asparagine 227, and serine 269. The isopentenyl diphosphate site is built by serine 225, serine 226, asparagine 227, and serine 269.

The protein belongs to the IspH family. [4Fe-4S] cluster is required as a cofactor.

It carries out the reaction isopentenyl diphosphate + 2 oxidized [2Fe-2S]-[ferredoxin] + H2O = (2E)-4-hydroxy-3-methylbut-2-enyl diphosphate + 2 reduced [2Fe-2S]-[ferredoxin] + 2 H(+). The catalysed reaction is dimethylallyl diphosphate + 2 oxidized [2Fe-2S]-[ferredoxin] + H2O = (2E)-4-hydroxy-3-methylbut-2-enyl diphosphate + 2 reduced [2Fe-2S]-[ferredoxin] + 2 H(+). It functions in the pathway isoprenoid biosynthesis; dimethylallyl diphosphate biosynthesis; dimethylallyl diphosphate from (2E)-4-hydroxy-3-methylbutenyl diphosphate: step 1/1. Its pathway is isoprenoid biosynthesis; isopentenyl diphosphate biosynthesis via DXP pathway; isopentenyl diphosphate from 1-deoxy-D-xylulose 5-phosphate: step 6/6. In terms of biological role, catalyzes the conversion of 1-hydroxy-2-methyl-2-(E)-butenyl 4-diphosphate (HMBPP) into a mixture of isopentenyl diphosphate (IPP) and dimethylallyl diphosphate (DMAPP). Acts in the terminal step of the DOXP/MEP pathway for isoprenoid precursor biosynthesis. This is 4-hydroxy-3-methylbut-2-enyl diphosphate reductase from Francisella tularensis subsp. novicida (strain U112).